Reading from the N-terminus, the 92-residue chain is MARSIKKGPFIEKSLYQKVLASSGKEKRVVIKTYSRTSTIIPEMVSLTISVYNGKSFIPVYITEDLVGHKLGEFSPTRIFRGHAKSDKKGRK.

Belongs to the universal ribosomal protein uS19 family.

Functionally, protein S19 forms a complex with S13 that binds strongly to the 16S ribosomal RNA. This Borrelia duttonii (strain Ly) protein is Small ribosomal subunit protein uS19.